Consider the following 155-residue polypeptide: Ribosome maturation factor RimP (155 aa).

Belongs to the RimP family.

It localises to the cytoplasm. Its function is as follows. Required for maturation of 30S ribosomal subunits. This chain is Ribosome maturation factor RimP, found in Bacteroides fragilis (strain ATCC 25285 / DSM 2151 / CCUG 4856 / JCM 11019 / LMG 10263 / NCTC 9343 / Onslow / VPI 2553 / EN-2).